Consider the following 201-residue polypeptide: LexA repressor (201 aa).

Residues 28 to 48 (LREIAAKLGISGTLGVMKHLE) constitute a DNA-binding region (H-T-H motif). Active-site for autocatalytic cleavage activity residues include Ser-120 and Lys-157.

It belongs to the peptidase S24 family. In terms of assembly, homodimer.

The catalysed reaction is Hydrolysis of Ala-|-Gly bond in repressor LexA.. Its function is as follows. Represses a number of genes involved in the response to DNA damage (SOS response), including recA and lexA. In the presence of single-stranded DNA, RecA interacts with LexA causing an autocatalytic cleavage which disrupts the DNA-binding part of LexA, leading to derepression of the SOS regulon and eventually DNA repair. The protein is LexA repressor of Geobacter sp. (strain M21).